A 130-amino-acid chain; its full sequence is Large ribosomal subunit protein bL17 (130 aa).

The protein belongs to the bacterial ribosomal protein bL17 family. Part of the 50S ribosomal subunit. Contacts protein L32.

This Photorhabdus laumondii subsp. laumondii (strain DSM 15139 / CIP 105565 / TT01) (Photorhabdus luminescens subsp. laumondii) protein is Large ribosomal subunit protein bL17.